Consider the following 484-residue polypeptide: uncharacterized protein (484 aa).

A helical membrane pass occupies residues 25–45 (PLSLFVVLAAVPLPIYFSGLL). An EF-hand domain is found at 384–419 (LSFEETKELWVRADLDGNGVFDYEELKKIWNMTMVN). Ca(2+) is bound by residues D397, D399, N401, and E408.

It is found in the membrane. This is an uncharacterized protein from Arabidopsis thaliana (Mouse-ear cress).